The following is a 263-amino-acid chain: Granzyme K (263 aa).

The first 21 residues, 1-21 (MRFSSWALVSLVAGVYMSSEC), serve as a signal peptide directing secretion. Positions 22–25 (FHTE) are cleaved as a propeptide — activation peptide. The Peptidase S1 domain maps to 26–258 (IIGGREVQPH…YQTWIKSKLA (233 aa)). The cysteines at positions 51 and 67 are disulfide-linked. Active-site charge relay system residues include histidine 66 and aspartate 115. 3 cysteine pairs are disulfide-bonded: cysteine 148-cysteine 219, cysteine 180-cysteine 198, and cysteine 209-cysteine 233. The active-site Charge relay system is serine 213.

It belongs to the peptidase S1 family. Granzyme subfamily.

The protein localises to the cytoplasmic granule. This chain is Granzyme K (Gzmk), found in Mus musculus (Mouse).